The following is a 291-amino-acid chain: Lipoyl synthase 1 (291 aa).

7 residues coordinate [4Fe-4S] cluster: C34, C39, C45, C60, C64, C67, and S274. One can recognise a Radical SAM core domain in the interval 46-263 (FQAGTATFLI…QVYGEELGFL (218 aa)).

Belongs to the radical SAM superfamily. Lipoyl synthase family. It depends on [4Fe-4S] cluster as a cofactor.

It localises to the cytoplasm. The enzyme catalyses [[Fe-S] cluster scaffold protein carrying a second [4Fe-4S](2+) cluster] + N(6)-octanoyl-L-lysyl-[protein] + 2 oxidized [2Fe-2S]-[ferredoxin] + 2 S-adenosyl-L-methionine + 4 H(+) = [[Fe-S] cluster scaffold protein] + N(6)-[(R)-dihydrolipoyl]-L-lysyl-[protein] + 4 Fe(3+) + 2 hydrogen sulfide + 2 5'-deoxyadenosine + 2 L-methionine + 2 reduced [2Fe-2S]-[ferredoxin]. It participates in protein modification; protein lipoylation via endogenous pathway; protein N(6)-(lipoyl)lysine from octanoyl-[acyl-carrier-protein]: step 2/2. Functionally, catalyzes the radical-mediated insertion of two sulfur atoms into the C-6 and C-8 positions of the octanoyl moiety bound to the lipoyl domains of lipoate-dependent enzymes, thereby converting the octanoylated domains into lipoylated derivatives. The sequence is that of Lipoyl synthase 1 from Nostoc sp. (strain PCC 7120 / SAG 25.82 / UTEX 2576).